Consider the following 126-residue polypeptide: Protein ApaG (126 aa).

One can recognise an ApaG domain in the interval 2-126; it reads ADKLYQMEVQ…MTLVAPRVLH (125 aa).

The polypeptide is Protein ApaG (Chromobacterium violaceum (strain ATCC 12472 / DSM 30191 / JCM 1249 / CCUG 213 / NBRC 12614 / NCIMB 9131 / NCTC 9757 / MK)).